The sequence spans 534 residues: High affinity cGMP-specific 3',5'-cyclic phosphodiesterase 9A (534 aa).

One can recognise a PDEase domain in the interval 175 to 496 (PRRDVPTYPK…EHYEELKQLD (322 aa)). Catalysis depends on His251, which acts as the Proton donor. Residue 251–255 (HNFRH) participates in 3',5'-cyclic GMP binding. Zn(2+)-binding residues include His255, His291, and Asp292. Asp292 lines the 3',5'-cyclic GMP pocket. Asp292 is a binding site for Mg(2+). A Phosphoserine modification is found at Ser318. Residues Asp401, Tyr423, and 451 to 452 (AQ) each bind 3',5'-cyclic GMP. Asp401 serves as a coordination point for Zn(2+). The tract at residues 500-534 (KELQKKTESLTSGAPENTTEKNRDAKDSEGHSPPN) is disordered. Basic and acidic residues predominate over residues 517–534 (TTEKNRDAKDSEGHSPPN).

Belongs to the cyclic nucleotide phosphodiesterase family. PDE9 subfamily. In terms of assembly, homodimer. Zn(2+) serves as cofactor. Requires Mg(2+) as cofactor. Highly expressed in kidney. Lower levels in liver, lung and brain. Widely expressed in brain, with highest expression in cerebellar Purkinje cells. Present in heart (at protein level).

The protein localises to the cell projection. It localises to the ruffle membrane. It is found in the cytoplasm. Its subcellular location is the perinuclear region. The protein resides in the golgi apparatus. The protein localises to the endoplasmic reticulum. It localises to the cell membrane. It is found in the sarcolemma. The enzyme catalyses 3',5'-cyclic GMP + H2O = GMP + H(+). The protein operates within purine metabolism; 3',5'-cyclic GMP degradation; GMP from 3',5'-cyclic GMP: step 1/1. With respect to regulation, inhibited by SCH 51866 and moderately, by zaprinast. Specifically inhibited by PF-04447943 (6-[(3S,4S)-4-methyl-1-(pyrimidin-2-ylmethyl)pyrrolidin-3-yl]-1-(tetrahydro-2H-pyran-4-yl)-1,5-dihydro-4H-pyrazolo[3,4-d]pyrimidin-4-one). Its function is as follows. Specifically hydrolyzes the second messenger cGMP, which is a key regulator of many important physiological processes. Highly specific: compared to other members of the cyclic nucleotide phosphodiesterase family, has the highest affinity and selectivity for cGMP. Specifically regulates natriuretic-peptide-dependent cGMP signaling in heart, acting as a regulator of cardiac hypertrophy in myocytes and muscle. Does not regulate nitric oxide-dependent cGMP in heart. Additional experiments are required to confirm whether its ability to hydrolyze natriuretic-peptide-dependent cGMP is specific to heart or is a general feature of the protein. In brain, involved in cognitive function, such as learning and long-term memory. The protein is High affinity cGMP-specific 3',5'-cyclic phosphodiesterase 9A (Pde9a) of Mus musculus (Mouse).